A 368-amino-acid polypeptide reads, in one-letter code: Alanine racemase (368 aa).

Lys-40 serves as the catalytic Proton acceptor; specific for D-alanine. N6-(pyridoxal phosphate)lysine is present on Lys-40. Arg-136 is a binding site for substrate. Tyr-263 functions as the Proton acceptor; specific for L-alanine in the catalytic mechanism. Met-310 contributes to the substrate binding site.

Belongs to the alanine racemase family. Pyridoxal 5'-phosphate serves as cofactor.

The enzyme catalyses L-alanine = D-alanine. Its pathway is amino-acid biosynthesis; D-alanine biosynthesis; D-alanine from L-alanine: step 1/1. Functionally, catalyzes the interconversion of L-alanine and D-alanine. May also act on other amino acids. The chain is Alanine racemase (alr) from Streptococcus gordonii (strain Challis / ATCC 35105 / BCRC 15272 / CH1 / DL1 / V288).